We begin with the raw amino-acid sequence, 106 residues long: MERQNIRIRLKAFDHRALDMSAKEIVNTAKRTGAEVRGPVPLPTRIERFTVNRSPHIDKKSREQFEIRTHTRILDIVDPTPQTVDALMKLDLSSGVGIEIKLEGAR.

This sequence belongs to the universal ribosomal protein uS10 family. Part of the 30S ribosomal subunit.

Involved in the binding of tRNA to the ribosomes. This chain is Small ribosomal subunit protein uS10, found in Hyphomonas neptunium (strain ATCC 15444).